The chain runs to 355 residues: tRNA pseudouridine synthase D (355 aa).

D84 (nucleophile) is an active-site residue. Residues 160–306 form the TRUD domain; that stretch reads GVPNYFGLQR…MAHERRILRL (147 aa).

The protein belongs to the pseudouridine synthase TruD family.

It carries out the reaction uridine(13) in tRNA = pseudouridine(13) in tRNA. Responsible for synthesis of pseudouridine from uracil-13 in transfer RNAs. This is tRNA pseudouridine synthase D from Pseudomonas aeruginosa (strain LESB58).